The primary structure comprises 246 residues: 4-hydroxy-tetrahydrodipicolinate reductase (246 aa).

Residue Gly7–Met12 coordinates NAD(+). Arg34 lines the NADP(+) pocket. Residues Ala76–Thr78 and Cys102–Thr105 each bind NAD(+). His135 acts as the Proton donor/acceptor in catalysis. His136 contributes to the (S)-2,3,4,5-tetrahydrodipicolinate binding site. The active-site Proton donor is Lys139. Gly145–Thr146 contributes to the (S)-2,3,4,5-tetrahydrodipicolinate binding site.

This sequence belongs to the DapB family.

It is found in the cytoplasm. It catalyses the reaction (S)-2,3,4,5-tetrahydrodipicolinate + NAD(+) + H2O = (2S,4S)-4-hydroxy-2,3,4,5-tetrahydrodipicolinate + NADH + H(+). The catalysed reaction is (S)-2,3,4,5-tetrahydrodipicolinate + NADP(+) + H2O = (2S,4S)-4-hydroxy-2,3,4,5-tetrahydrodipicolinate + NADPH + H(+). Its pathway is amino-acid biosynthesis; L-lysine biosynthesis via DAP pathway; (S)-tetrahydrodipicolinate from L-aspartate: step 4/4. Catalyzes the conversion of 4-hydroxy-tetrahydrodipicolinate (HTPA) to tetrahydrodipicolinate. The chain is 4-hydroxy-tetrahydrodipicolinate reductase from Chlamydia abortus (strain DSM 27085 / S26/3) (Chlamydophila abortus).